The sequence spans 535 residues: Beta-glucosidase 47 (535 aa).

An N-terminal signal peptide occupies residues 1–38; sequence MKKSIVYEIMETKSSMYLSQFRLWLCFIITTLVSLSSS. Gln-73 is a binding site for a beta-D-glucoside. An N-linked (GlcNAc...) asparagine glycan is attached at Asn-93. A beta-D-glucoside is bound by residues His-175 and 220-221; that span reads NE. The Proton donor role is filled by Glu-221. Cysteines 240 and 247 form a disulfide. An N-linked (GlcNAc...) asparagine glycan is attached at Asn-246. Tyr-363 is a binding site for a beta-D-glucoside. Cys-371 and Cys-376 are disulfide-bonded. Asn-419 is a glycosylation site (N-linked (GlcNAc...) asparagine). Glu-426 contributes to the a beta-D-glucoside binding site. The Nucleophile role is filled by Glu-426. The N-linked (GlcNAc...) asparagine glycan is linked to Asn-432. Residues Trp-470, 477 to 478, and Phe-486 contribute to the a beta-D-glucoside site; that span reads EW.

This sequence belongs to the glycosyl hydrolase 1 family.

It carries out the reaction Hydrolysis of terminal, non-reducing beta-D-glucosyl residues with release of beta-D-glucose.. This Arabidopsis thaliana (Mouse-ear cress) protein is Beta-glucosidase 47.